The sequence spans 223 residues: Cuticular glutathione peroxidase (223 aa).

A signal peptide spans 1 to 19 (MSAQLLILSHMVLLQLIVA). A glycan (N-linked (GlcNAc...) asparagine) is linked at Asn-39. Cys-74 is a catalytic residue. A glycan (N-linked (GlcNAc...) asparagine) is linked at Asn-92.

The protein belongs to the glutathione peroxidase family. As to quaternary structure, homotetramer.

It localises to the secreted. The catalysed reaction is 2 glutathione + H2O2 = glutathione disulfide + 2 H2O. Could inhibit the oxidative burst of leukocytes and neutralize the secondary products of lipid peroxidation, thus providing the resistance of these parasites to immune effector mechanisms and their persistence in the mammalian host. It may also be involved in the formation of cross-linking residues such as dityrosine, trityrosine and isotrityrosine identified in cuticular collagen. Highly cross-linked external cortex may also serve to protect the parasite from immune attack. The sequence is that of Cuticular glutathione peroxidase from Brugia malayi (Filarial nematode worm).